The primary structure comprises 358 residues: MFDQLQSIKDRYKEIEKQLSDPGVISNQDKFRQLNKEYSGLSEIVKAYDEYRKAKDALQQSKELLYTESDPEMKELAQADYDEYSEKVPELEQQLKILLLPKEEADSRNAMVEIRAGAGGDEAALFAADLLRMYQRFAERNGWKCEVLDYNESSGLGGFKEATISLSGDDVYGTMKFESGVHRVQRVPETETQGRVHTSAASVAVLPEAEDFDIEIRKEDLQMDTYRSGGKGGQNVNKVETAVRITHVPSGIVVACQEERSQLQNRERAMKMLRSKLYDIKLAEQQKERADLRRSMVSTGDRSAKIRTYNFPQSRVTDHRIGFTTHALPQLLDGDLFEIIEALRVHDQTERLKAQVGA.

At glutamine 234 the chain carries N5-methylglutamine.

It belongs to the prokaryotic/mitochondrial release factor family. In terms of processing, methylated by PrmC. Methylation increases the termination efficiency of RF1.

Its subcellular location is the cytoplasm. In terms of biological role, peptide chain release factor 1 directs the termination of translation in response to the peptide chain termination codons UAG and UAA. This is Peptide chain release factor 1 from Chloroherpeton thalassium (strain ATCC 35110 / GB-78).